The following is a 263-amino-acid chain: Proteasome subunit alpha type-1 (263 aa).

The residue at position 1 (methionine 1) is an N-acetylmethionine. Serine 110 is subject to Phosphoserine; alternate. An O-linked (GlcNAc) serine; alternate glycan is attached at serine 110. Lysine 115 participates in a covalent cross-link: Glycyl lysine isopeptide (Lys-Gly) (interchain with G-Cter in ubiquitin). Serine 177 carries the post-translational modification Phosphoserine. Lysine 208 participates in a covalent cross-link: Glycyl lysine isopeptide (Lys-Gly) (interchain with G-Cter in ubiquitin). The disordered stretch occupies residues 232–263 (FLEGLEERPQRKAQPAQPADEPAEKADEPMEH). Residues 253–263 (PAEKADEPMEH) are compositionally biased toward basic and acidic residues.

The protein belongs to the peptidase T1A family. In terms of assembly, the 26S proteasome consists of a 20S proteasome core and two 19S regulatory subunits. The 20S proteasome core is a barrel-shaped complex made of 28 subunits that are arranged in four stacked rings. The two outer rings are each formed by seven alpha subunits, and the two inner rings are formed by seven beta subunits. The proteolytic activity is exerted by three beta-subunits PSMB5, PSMB6 and PSMB7. Interacts with NOTCH3. Interacts with ZFAND1.

The protein localises to the cytoplasm. It is found in the nucleus. Component of the 20S core proteasome complex involved in the proteolytic degradation of most intracellular proteins. This complex plays numerous essential roles within the cell by associating with different regulatory particles. Associated with two 19S regulatory particles, forms the 26S proteasome and thus participates in the ATP-dependent degradation of ubiquitinated proteins. The 26S proteasome plays a key role in the maintenance of protein homeostasis by removing misfolded or damaged proteins that could impair cellular functions, and by removing proteins whose functions are no longer required. Associated with the PA200 or PA28, the 20S proteasome mediates ubiquitin-independent protein degradation. This type of proteolysis is required in several pathways including spermatogenesis (20S-PA200 complex) or generation of a subset of MHC class I-presented antigenic peptides (20S-PA28 complex). In Homo sapiens (Human), this protein is Proteasome subunit alpha type-1.